The primary structure comprises 489 residues: Rhamnulokinase (489 aa).

Position 13–17 (13–17) interacts with ATP; that stretch reads ASSGR. A disulfide bridge connects residues Cys-68 and Cys-222. Substrate contacts are provided by residues Gly-83 and 236–238; that span reads HDT. Asp-237 (proton acceptor) is an active-site residue. Thr-259 lines the ATP pocket. Position 296 (Asn-296) interacts with substrate. Gln-304 contributes to the ATP binding site. An intrachain disulfide couples Cys-353 to Cys-370. Gly-402 is a binding site for ATP. A disulfide bond links Cys-413 and Cys-417.

Belongs to the rhamnulokinase family. Mg(2+) serves as cofactor.

It carries out the reaction L-rhamnulose + ATP = L-rhamnulose 1-phosphate + ADP + H(+). It participates in carbohydrate degradation; L-rhamnose degradation; glycerone phosphate from L-rhamnose: step 2/3. Its function is as follows. Involved in the catabolism of L-rhamnose (6-deoxy-L-mannose). Catalyzes the transfer of the gamma-phosphate group from ATP to the 1-hydroxyl group of L-rhamnulose to yield L-rhamnulose 1-phosphate. The chain is Rhamnulokinase from Salmonella paratyphi B (strain ATCC BAA-1250 / SPB7).